Here is a 224-residue protein sequence, read N- to C-terminus: 2-C-methyl-D-erythritol 4-phosphate cytidylyltransferase (224 aa).

It belongs to the IspD/TarI cytidylyltransferase family. IspD subfamily.

It catalyses the reaction 2-C-methyl-D-erythritol 4-phosphate + CTP + H(+) = 4-CDP-2-C-methyl-D-erythritol + diphosphate. It functions in the pathway isoprenoid biosynthesis; isopentenyl diphosphate biosynthesis via DXP pathway; isopentenyl diphosphate from 1-deoxy-D-xylulose 5-phosphate: step 2/6. Functionally, catalyzes the formation of 4-diphosphocytidyl-2-C-methyl-D-erythritol from CTP and 2-C-methyl-D-erythritol 4-phosphate (MEP). The sequence is that of 2-C-methyl-D-erythritol 4-phosphate cytidylyltransferase from Bordetella petrii (strain ATCC BAA-461 / DSM 12804 / CCUG 43448).